The following is a 250-amino-acid chain: Probable cytokinin riboside 5'-monophosphate phosphoribohydrolase LOGL6 (250 aa).

Substrate-binding positions include Glu98, 116 to 117 (RK), and 133 to 139 (GYGTLEE).

This sequence belongs to the LOG family. Expressed in roots, leaves, stems, tiller buds, shoot apex, immature inflorescences and flowers.

The catalysed reaction is N(6)-(dimethylallyl)adenosine 5'-phosphate + H2O = N(6)-dimethylallyladenine + D-ribose 5-phosphate. It carries out the reaction 9-ribosyl-trans-zeatin 5'-phosphate + H2O = trans-zeatin + D-ribose 5-phosphate. In terms of biological role, cytokinin-activating enzyme working in the direct activation pathway. Phosphoribohydrolase that converts inactive cytokinin nucleotides to the biologically active free-base forms. This Oryza sativa subsp. japonica (Rice) protein is Probable cytokinin riboside 5'-monophosphate phosphoribohydrolase LOGL6 (LOGL6).